The sequence spans 728 residues: MDKTQSSQGKCPVMHGANSAVASNNMDWWPKALNLDILHQHDKKTDPMDPKFNYREAFNSLDLAAVKRDLNALMTDSQDWWPADWGHYGGLMIRMAWHSAGTYRVADGRGGAGTGNQRFAPLNSWPDNANLDKARRLLWPIKKKYGNKLSWADLMILAGNVAYESMGLKTYGFAGGREDIWHPEKDIYWGSEKQWLAPTENPNSRYSGERDLENPLAAVMMGLIYVNPEGVDGKPDPLRTAQDVRVTFARMAMNDEETVALTAGGHTVGKCHGNGKAQDLGPEPEGEELEAQGLGWLNKKGPGTGANAVTSGLEGAWTTHPTQWDNGYFHLLLNYDWELKKSPAGASQWEPINIKEEDKVVSVGDPNRKFNPIMTDADMAMKMDPEYRKISEKFYQDPAYFSEVFARAWFKLTHRDLGPKSRYLGPEVPNEDLLWQDPIPSVDYRLDASEIVDLKAKLLASGLSVSELVATAWDSARTFRGSDFRGGANGARIRLAPQKDWQANEPERLQKVLKVLTELQASLSKKVSIADLIVLGGAAAIEKAAHEAGVKVTVPFIPGRGDATQEMTDVESFAVLEPLHDAYRNWQKKDYVVQPEEMMLDRTQLMGLTAHEMTVLVGGMRVLGTNYGGTRHGVFTDKVGVLTNDFFVNLTDMAYNWKPAGSNLYQIVERKTGAVKWTASRVDLVFGSNSILRAYAEMYAQDDAKEKFVHDFVAAWTKVMNADRFDLA.

The N-terminal stretch at 1 to 22 (MDKTQSSQGKCPVMHGANSAVA) is a signal peptide. A cross-link (tryptophyl-tyrosyl-methioninium (Trp-Tyr) (with M-251)) is located at residues 97-225 (WHSAGTYRVA…LAAVMMGLIY (129 aa)). The active-site Proton acceptor is the His98. Residues 225–251 (YVNPEGVDGKPDPLRTAQDVRVTFARM) constitute a cross-link (tryptophyl-tyrosyl-methioninium (Tyr-Met) (with W-97)). His266 serves as a coordination point for heme b.

This sequence belongs to the peroxidase family. Peroxidase/catalase subfamily. As to quaternary structure, homodimer or homotetramer. Heme b serves as cofactor. In terms of processing, formation of the three residue Trp-Tyr-Met cross-link is important for the catalase, but not the peroxidase activity of the enzyme.

The catalysed reaction is H2O2 + AH2 = A + 2 H2O. The enzyme catalyses 2 H2O2 = O2 + 2 H2O. Its function is as follows. Bifunctional enzyme with both catalase and broad-spectrum peroxidase activity. The sequence is that of Catalase-peroxidase 1 from Shewanella sp. (strain MR-7).